The primary structure comprises 572 residues: Methionine--tRNA ligase (572 aa).

Positions 11–21 (PYINGIKHLGN) match the 'HIGH' region motif. Residues cysteine 143, cysteine 146, cysteine 156, and cysteine 159 each contribute to the Zn(2+) site. The 'KMSKS' region motif lies at 346 to 350 (QFSTS). Threonine 349 is a binding site for ATP.

The protein belongs to the class-I aminoacyl-tRNA synthetase family. MetG type 1 subfamily. As to quaternary structure, monomer. It depends on Zn(2+) as a cofactor.

The protein localises to the cytoplasm. It carries out the reaction tRNA(Met) + L-methionine + ATP = L-methionyl-tRNA(Met) + AMP + diphosphate. In terms of biological role, is required not only for elongation of protein synthesis but also for the initiation of all mRNA translation through initiator tRNA(fMet) aminoacylation. This is Methionine--tRNA ligase from Cereibacter sphaeroides (strain ATCC 17025 / ATH 2.4.3) (Rhodobacter sphaeroides).